Consider the following 624-residue polypeptide: Sodium/potassium/calcium exchanger 3 (624 aa).

The first 25 residues, 1 to 25, serve as a signal peptide directing secretion; it reads RDLLLSQLCFLASVALLLWSLSSLR. Over 26 to 88 the chain is Extracellular; that stretch reads EQKELDLMDL…DIFSNEDRRQ (63 aa). N-linked (GlcNAc...) asparagine glycans are attached at residues N52 and N67. Residues 89-109 traverse the membrane as a helical segment; sequence GAVVLHVLCAMYMFYALAIVC. Over 110-133 the chain is Cytoplasmic; that stretch reads DDFFVPSLEKICERLHLSEDVAGA. The Alpha-1 repeat unit spans residues 130–170; that stretch reads VAGATFMAAGSSAPELFTSVIGVFITKGDVGVGTIVGSAVF. The chain crosses the membrane as a helical span at residues 134–154; the sequence is TFMAAGSSAPELFTSVIGVFI. Residues 155–163 are Extracellular-facing; the sequence is TKGDVGVGT. The helical transmembrane segment at 164–184 threads the bilayer; the sequence is IVGSAVFNILCIIGVCGLFAG. Residues 185–191 are Cytoplasmic-facing; it reads QVVALSS. The helical transmembrane segment at 192–212 threads the bilayer; that stretch reads WCLLRDSIYYTLSVVALIVFI. The Extracellular segment spans residues 213 to 215; that stretch reads YDE. The helical transmembrane segment at 216–236 threads the bilayer; it reads KVSWWESLVLVLMYLIYIIIM. The Cytoplasmic segment spans residues 237 to 465; that stretch reads KYNACIHQCF…WFMVTFASST (229 aa). Position 289 is a phosphoserine (S289). Acidic residues predominate over residues 386-414; it reads AEADNETENENEDENNENDEEEDEDDDEG. The interval 386–421 is disordered; that stretch reads AEADNETENENEDENNENDEEEDEDDDEGPYTPFDP. A helical membrane pass occupies residues 466–486; it reads LWIAAFSYMMVWMVTIIGYTL. Topologically, residues 487 to 491 are extracellular; it reads GIPDV. The chain crosses the membrane as a helical span at residues 492–512; sequence IMGITFLAAGTSVPDCMASLI. The stretch at 499 to 530 is one Alpha-2 repeat; the sequence is AAGTSVPDCMASLIVARQGMGDMAVSNSIGSN. The Cytoplasmic portion of the chain corresponds to 513-530; the sequence is VARQGMGDMAVSNSIGSN. A helical membrane pass occupies residues 531 to 551; it reads VFDILIGLGLPWALQTLAVDY. The Extracellular portion of the chain corresponds to 552–561; the sequence is GSYIRLNSRG. The helical transmembrane segment at 562-582 threads the bilayer; it reads LIYSVGLLLASVFVTVFGVHL. Over 583-596 the chain is Cytoplasmic; that stretch reads NKWQLDKKLGCGCL. The chain crosses the membrane as a helical span at residues 597-617; the sequence is FLYGVFLCFSIMTEFNVFTFV. The Extracellular segment spans residues 618–624; the sequence is NLPMCGD.

It belongs to the Ca(2+):cation antiporter (CaCA) (TC 2.A.19) family. SLC24A subfamily. In terms of tissue distribution, abundant in the brain. Expressed at low levels in the aorta, uterus and intestine.

It localises to the cell membrane. It carries out the reaction Ca(2+)(out) + K(+)(out) + 4 Na(+)(in) = Ca(2+)(in) + K(+)(in) + 4 Na(+)(out). Calcium, potassium:sodium antiporter that transports 1 Ca(2+) and 1 K(+) in exchange for 4 Na(+). This chain is Sodium/potassium/calcium exchanger 3 (Slc24a3), found in Rattus norvegicus (Rat).